Reading from the N-terminus, the 724-residue chain is Putative methyltransferase NSUN7 (724 aa).

The active-site Nucleophile is Cys444. Disordered regions lie at residues 542-574, 595-629, and 698-724; these read KTLK…LAVD, ISTS…TPLV, and TSST…RPWL. Over residues 543 to 554 the composition is skewed to basic residues; sequence TLKRDKKRKKSK. Residues 562 to 572 are compositionally biased toward basic and acidic residues; that stretch reads HHGDPLRDHLA. Positions 595–618 are enriched in polar residues; the sequence is ISTSTKMSAPAKTVSQAGTSSQVR.

This sequence belongs to the class I-like SAM-binding methyltransferase superfamily. RsmB/NOP family. As to expression, expressed in testis.

May have S-adenosyl-L-methionine-dependent methyl-transferase activity. This chain is Putative methyltransferase NSUN7 (Nsun7), found in Mus musculus (Mouse).